The following is a 120-amino-acid chain: NAD(P)H-quinone oxidoreductase subunit 3, chloroplastic (120 aa).

Transmembrane regions (helical) follow at residues 9 to 29 (IFWA…LISG), 64 to 84 (MFAL…PWAM), and 88 to 108 (VLGV…ILGL).

Belongs to the complex I subunit 3 family. NDH is composed of at least 16 different subunits, 5 of which are encoded in the nucleus.

It is found in the plastid. The protein localises to the chloroplast thylakoid membrane. It catalyses the reaction a plastoquinone + NADH + (n+1) H(+)(in) = a plastoquinol + NAD(+) + n H(+)(out). The catalysed reaction is a plastoquinone + NADPH + (n+1) H(+)(in) = a plastoquinol + NADP(+) + n H(+)(out). Functionally, NDH shuttles electrons from NAD(P)H:plastoquinone, via FMN and iron-sulfur (Fe-S) centers, to quinones in the photosynthetic chain and possibly in a chloroplast respiratory chain. The immediate electron acceptor for the enzyme in this species is believed to be plastoquinone. Couples the redox reaction to proton translocation, and thus conserves the redox energy in a proton gradient. This Arabis hirsuta (Hairy rock-cress) protein is NAD(P)H-quinone oxidoreductase subunit 3, chloroplastic.